The sequence spans 256 residues: NH(3)-dependent NAD(+) synthetase (256 aa).

An ATP-binding site is contributed by 29-36 (GISGGIDS). Position 35 (Asp35) interacts with Mg(2+). Arg115 is a binding site for deamido-NAD(+). Position 135 (Thr135) interacts with ATP. Position 140 (Glu140) interacts with Mg(2+). Deamido-NAD(+)-binding residues include Lys148 and Asp155. Residues Lys164 and Ser186 each coordinate ATP. 245–246 (HK) serves as a coordination point for deamido-NAD(+).

Belongs to the NAD synthetase family. Homodimer.

The enzyme catalyses deamido-NAD(+) + NH4(+) + ATP = AMP + diphosphate + NAD(+) + H(+). The protein operates within cofactor biosynthesis; NAD(+) biosynthesis; NAD(+) from deamido-NAD(+) (ammonia route): step 1/1. Catalyzes the ATP-dependent amidation of deamido-NAD to form NAD. Uses ammonia as a nitrogen source. This is NH(3)-dependent NAD(+) synthetase from Methanosarcina acetivorans (strain ATCC 35395 / DSM 2834 / JCM 12185 / C2A).